A 95-amino-acid chain; its full sequence is MTTLRKLLLVGALLGAGAGVGTALFALVTPGEERKQAMLKEMPEQYPQRRDEAARTKELLLATLQEAAATQENVAWRKNWMSGGGGGGGGGGRSA.

The Mitochondrial matrix portion of the chain corresponds to 1–7 (MTTLRKL). The chain crosses the membrane as a helical span at residues 8–28 (LLVGALLGAGAGVGTALFALV). Residues 23–80 (ALFALVTPGEERKQAMLKEMPEQYPQRRDEAARTKELLLATLQEAAATQENVAWRKNW) are mediates lipid-binding. Residues 29–95 (TPGEERKQAM…GGGGGGGRSA (67 aa)) are Mitochondrial intermembrane-facing.

It belongs to the UQCC3 family. Associates with the ubiquinol-cytochrome c reductase complex (mitochondrial respiratory chain complex III(CIII) or cytochrome b-c1 complex). Interacts with UQCC1. Forms a complex, named COMC, composed of UQCC1, UQCC2; UQCC3 and UQCC4; mediates MT-CYB hemylation and association with the first nuclear-encoded complex III subunit UQCRQ. Probably cleaved by OMA1 under mitochondrial stress conditions.

The protein resides in the mitochondrion inner membrane. Functionally, required for the assembly of the ubiquinol-cytochrome c reductase complex (mitochondrial respiratory chain complex III or cytochrome b-c1 complex), mediating cytochrome b recruitment and probably stabilization within the complex. Thereby, plays an important role in ATP production by mitochondria. Cardiolipin-binding protein, it may also control the cardiolipin composition of mitochondria membranes and their morphology. The protein is Ubiquinol-cytochrome-c reductase complex assembly factor 3 of Bos taurus (Bovine).